We begin with the raw amino-acid sequence, 129 residues long: Phosphoribosyl-AMP cyclohydrolase (129 aa).

Position 85 (D85) interacts with Mg(2+). Residue C86 participates in Zn(2+) binding. Residues D87 and D89 each contribute to the Mg(2+) site. Zn(2+) is bound by residues C102 and C109.

The protein belongs to the PRA-CH family. Homodimer. Requires Mg(2+) as cofactor. It depends on Zn(2+) as a cofactor.

It localises to the cytoplasm. It carries out the reaction 1-(5-phospho-beta-D-ribosyl)-5'-AMP + H2O = 1-(5-phospho-beta-D-ribosyl)-5-[(5-phospho-beta-D-ribosylamino)methylideneamino]imidazole-4-carboxamide. It participates in amino-acid biosynthesis; L-histidine biosynthesis; L-histidine from 5-phospho-alpha-D-ribose 1-diphosphate: step 3/9. Functionally, catalyzes the hydrolysis of the adenine ring of phosphoribosyl-AMP. The protein is Phosphoribosyl-AMP cyclohydrolase of Methanococcus maripaludis (strain C6 / ATCC BAA-1332).